A 251-amino-acid polypeptide reads, in one-letter code: Ubiquinone/menaquinone biosynthesis C-methyltransferase UbiE (251 aa).

S-adenosyl-L-methionine-binding positions include threonine 74, aspartate 95, 123–124, and serine 140; that span reads NA.

The protein belongs to the class I-like SAM-binding methyltransferase superfamily. MenG/UbiE family.

The enzyme catalyses a 2-demethylmenaquinol + S-adenosyl-L-methionine = a menaquinol + S-adenosyl-L-homocysteine + H(+). It carries out the reaction a 2-methoxy-6-(all-trans-polyprenyl)benzene-1,4-diol + S-adenosyl-L-methionine = a 5-methoxy-2-methyl-3-(all-trans-polyprenyl)benzene-1,4-diol + S-adenosyl-L-homocysteine + H(+). The protein operates within quinol/quinone metabolism; menaquinone biosynthesis; menaquinol from 1,4-dihydroxy-2-naphthoate: step 2/2. It functions in the pathway cofactor biosynthesis; ubiquinone biosynthesis. Functionally, methyltransferase required for the conversion of demethylmenaquinol (DMKH2) to menaquinol (MKH2) and the conversion of 2-polyprenyl-6-methoxy-1,4-benzoquinol (DDMQH2) to 2-polyprenyl-3-methyl-6-methoxy-1,4-benzoquinol (DMQH2). This chain is Ubiquinone/menaquinone biosynthesis C-methyltransferase UbiE, found in Escherichia coli O9:H4 (strain HS).